A 459-amino-acid polypeptide reads, in one-letter code: 1,3-beta-glucanosyltransferase gas2 (459 aa).

Positions 1–19 (MVSFTKFTLQLLSASAAFA) are cleaved as a signal peptide. N-linked (GlcNAc...) asparagine glycosylation is found at Asn34 and Asn68. A disulfide bridge connects residues Cys69 and Cys98. Residue Tyr87 participates in (1,3-beta-D-glucosyl)n binding. N-linked (GlcNAc...) asparagine glycans are attached at residues Asn90, Asn104, and Asn146. (1,3-beta-D-glucosyl)n is bound by residues Asn155 and Glu156. Glu156 (proton donor) is an active-site residue. N-linked (GlcNAc...) asparagine glycosylation occurs at Asn160. Residues Asp197 and Arg202 each contribute to the (1,3-beta-D-glucosyl)n site. 2 disulfide bridges follow: Cys211/Cys350 and Cys235/Cys266. 3 N-linked (GlcNAc...) asparagine glycosylation sites follow: Asn212, Asn218, and Asn254. The active-site Nucleophile is Glu263. An N-linked (GlcNAc...) asparagine glycan is attached at Asn284. Residue Tyr295 coordinates (1,3-beta-D-glucosyl)n. Residues Asn308, Asn334, Asn344, Asn354, and Asn370 are each glycosylated (N-linked (GlcNAc...) asparagine). 3 disulfide bridges follow: Cys374–Cys427, Cys383–Cys449, and Cys402–Cys409. The N-linked (GlcNAc...) asparagine glycan is linked to Asn423.

This sequence belongs to the glycosyl hydrolase 72 family.

It localises to the endoplasmic reticulum lumen. The protein resides in the secreted. Its function is as follows. Splits internally a 1,3-beta-glucan molecule and transfers the newly generated reducing end (the donor) to the non-reducing end of another 1,3-beta-glucan molecule (the acceptor) forming a 1,3-beta linkage, resulting in the elongation of 1,3-beta-glucan chains in the cell wall. This Schizosaccharomyces pombe (strain 972 / ATCC 24843) (Fission yeast) protein is 1,3-beta-glucanosyltransferase gas2 (gas2).